The following is a 300-amino-acid chain: UPF0761 membrane protein Patl_3954 (300 aa).

The next 6 membrane-spanning stretches (helical) occupy residues 46–66, 103–123, 138–158, 184–204, 214–234, and 248–268; these read LLSLVPFIMVFFTILSAFPAF, MGAIGILSLVVVALLLISNID, IIFTFAIYWMILTLGPLLIGL, MLKIVPFIASVCAFFILYMIV, ALVGAFMGALLFELSKKGFSF, and AMAVIPILFVWVYLSWIVVLL.

Belongs to the UPF0761 family.

It localises to the cell inner membrane. The sequence is that of UPF0761 membrane protein Patl_3954 from Pseudoalteromonas atlantica (strain T6c / ATCC BAA-1087).